The chain runs to 146 residues: UPF0306 protein HD_1359 (146 aa).

The protein belongs to the UPF0306 family.

The chain is UPF0306 protein HD_1359 from Haemophilus ducreyi (strain 35000HP / ATCC 700724).